We begin with the raw amino-acid sequence, 152 residues long: Protein Smg homolog (152 aa).

This sequence belongs to the Smg family.

In Bordetella petrii (strain ATCC BAA-461 / DSM 12804 / CCUG 43448), this protein is Protein Smg homolog.